We begin with the raw amino-acid sequence, 420 residues long: Tyrosine--tRNA ligase (420 aa).

L-tyrosine is bound at residue Y33. A 'HIGH' region motif is present at residues 38 to 47 (PTADSLHVGH). L-tyrosine is bound by residues Y167 and Q171. The 'KMSKS' region motif lies at 227–231 (KFGKT). K230 provides a ligand contact to ATP. Residues 353 to 419 (LTVADLLVKV…GKRNYALVKV (67 aa)) enclose the S4 RNA-binding domain.

It belongs to the class-I aminoacyl-tRNA synthetase family. TyrS type 1 subfamily. As to quaternary structure, homodimer.

The protein resides in the cytoplasm. The catalysed reaction is tRNA(Tyr) + L-tyrosine + ATP = L-tyrosyl-tRNA(Tyr) + AMP + diphosphate + H(+). Its function is as follows. Catalyzes the attachment of tyrosine to tRNA(Tyr) in a two-step reaction: tyrosine is first activated by ATP to form Tyr-AMP and then transferred to the acceptor end of tRNA(Tyr). The protein is Tyrosine--tRNA ligase of Anaeromyxobacter dehalogenans (strain 2CP-1 / ATCC BAA-258).